The following is a 241-amino-acid chain: MGSFPFLLPFAELEVGQHLYWQLGNIRIHGQVFMTSWLLIGALLTLVVVGTKKMERDPKGVQNLLEFLWDYIRDLARTQIGEKVYRDWMPFIGTLFLFIFVSNWGGALVPWRLIRLPSGELGAPTADINTTVALALLVSLSYFYAGLSNKGLRYFEYYVHPTPIMLPFKIVEDFTKPLSLSFRLFGNILADELVVAVLVFLVPLVLPVPVMFLGLFTSAIQALIFATLAAYYIGEAVEEHH.

5 helical membrane-spanning segments follow: residues 30-50 (GQVF…VVVG), 91-111 (FIGT…LVPW), 128-148 (INTT…AGLS), 193-213 (LVVA…VMFL), and 214-234 (GLFT…YYIG).

It belongs to the ATPase A chain family. As to quaternary structure, F-type ATPases have 2 components, CF(1) - the catalytic core - and CF(0) - the membrane proton channel. CF(1) has five subunits: alpha(3), beta(3), gamma(1), delta(1), epsilon(1). CF(0) has four main subunits: a, b, b' and c.

It is found in the cellular thylakoid membrane. In terms of biological role, key component of the proton channel; it plays a direct role in the translocation of protons across the membrane. The chain is ATP synthase subunit a from Prochlorococcus marinus (strain MIT 9211).